A 274-amino-acid polypeptide reads, in one-letter code: Kit ligand (274 aa).

An N-terminal signal peptide occupies residues 1-25; that stretch reads MKKTQTWIITCIYLQLLLFNPLVRT. Topologically, residues 26 to 215 are extracellular; that stretch reads KGICRNRVTD…ANPLGDSNLQ (190 aa). Intrachain disulfides connect cysteine 29–cysteine 114 and cysteine 68–cysteine 164. N-linked (GlcNAc...) asparagine glycosylation is found at asparagine 90, asparagine 97, asparagine 145, and asparagine 196. A helical membrane pass occupies residues 216–238; sequence WAAMALPAFFSLVIGFAFGALYW. The Cytoplasmic segment spans residues 239–274; sequence KKKQPNLTRTAENIQINEEDNEISMLQEKEREFQEV.

The protein belongs to the SCF family. As to quaternary structure, homodimer, non-covalently linked. Heterotetramer with KIT, binding two KIT molecules; thereby mediates KIT dimerization and subsequent activation by autophosphorylation. In terms of processing, a soluble form is produced by proteolytic processing of isoform 1 in the extracellular domain.

The protein localises to the cytoplasm. It is found in the cytoskeleton. It localises to the cell membrane. The protein resides in the cell projection. Its subcellular location is the lamellipodium. The protein localises to the filopodium. It is found in the secreted. In terms of biological role, ligand for the receptor-type protein-tyrosine kinase KIT. Plays an essential role in the regulation of cell survival and proliferation, hematopoiesis, stem cell maintenance, gametogenesis, mast cell development, migration and function, and in melanogenesis. KITLG/SCF binding can activate several signaling pathways. Promotes phosphorylation of PIK3R1, the regulatory subunit of phosphatidylinositol 3-kinase, and subsequent activation of the kinase AKT1. KITLG/SCF and KIT also transmit signals via GRB2 and activation of RAS, RAF1 and the MAP kinases MAPK1/ERK2 and/or MAPK3/ERK1. KITLG/SCF and KIT promote activation of STAT family members STAT1, STAT3 and STAT5. KITLG/SCF and KIT promote activation of PLCG1, leading to the production of the cellular signaling molecules diacylglycerol and inositol 1,4,5-trisphosphate. KITLG/SCF acts synergistically with other cytokines, probably interleukins. The chain is Kit ligand (KITLG) from Neovison vison (American mink).